The sequence spans 407 residues: Aurofusarin biosynthesis cluster protein S (407 aa).

Residues 1-35 form the signal peptide; it reads MSKQKPSLWRALRALSFIISIPLLIQYLVLKWYST. N-linked (GlcNAc...) asparagine glycans are attached at residues Asn52, Asn174, Asn196, Asn274, and Asn312. FAS1 domains are found at residues 52-192 and 195-365; these read NLTV…DTVL and PNST…DSIL.

Might be part of an extracellular enzyme complex composed of GIP1, aurF, aurO and aurS.

Its subcellular location is the secreted. It is found in the extracellular space. The protein operates within pigment biosynthesis. In terms of biological role, part of the gene cluster that mediates the biosynthesis of aurofusarin, a red mycelium pigment which is acting as a mycotoxin. The first step is performed by the polyketide synthase which condenses one acetyl-CoA and 6 malonyl-CoA units to form the first intermediate, the cyclic heptaketide and yellow pigment YWA1. The C2 hydroxyl group in the pyrone ring of YWA1 is probably formed during ring closure by an aldol-type cyclization reaction. The dehydratase aurZ then acts as the first tailoring enzyme in the aurofusarin biosynthetic pathway by converting YWA1 to nor-rubrofusarin. Nor-rubrofusarin is then methylated to rubrofusarin by the O-methyltransferase aurJ. Rubrofusarin is then transported across the plasma membrane by the rubrofusarin-specific pump aurT for further enzymatic processing by the extracellular complex composed of GIP1, aurF, aurO and aurS to yield aurofusarin. The polypeptide is Aurofusarin biosynthesis cluster protein S (Gibberella zeae (strain ATCC MYA-4620 / CBS 123657 / FGSC 9075 / NRRL 31084 / PH-1) (Wheat head blight fungus)).